A 166-amino-acid chain; its full sequence is Large ribosomal subunit protein uL10 (166 aa).

This sequence belongs to the universal ribosomal protein uL10 family. In terms of assembly, part of the ribosomal stalk of the 50S ribosomal subunit. The N-terminus interacts with L11 and the large rRNA to form the base of the stalk. The C-terminus forms an elongated spine to which L12 dimers bind in a sequential fashion forming a multimeric L10(L12)X complex.

Forms part of the ribosomal stalk, playing a central role in the interaction of the ribosome with GTP-bound translation factors. This is Large ribosomal subunit protein uL10 from Bacillus pumilus (strain SAFR-032).